A 65-amino-acid chain; its full sequence is Large ribosomal subunit protein bL33 (65 aa).

The segment at 20-42 is disordered; it reads APASEKRSPGVSRYTTEKNRRNT.

The protein belongs to the bacterial ribosomal protein bL33 family.

This Prochlorococcus marinus (strain SARG / CCMP1375 / SS120) protein is Large ribosomal subunit protein bL33.